Reading from the N-terminus, the 495-residue chain is Sialin (495 aa).

A compositionally biased stretch (basic and acidic residues) spans 1-18 (MRSPVRDLARNDGEESTD). Residues 1 to 24 (MRSPVRDLARNDGEESTDRTPLLP) form a disordered region. Residues 1-41 (MRSPVRDLARNDGEESTDRTPLLPGAPRAEAAPVCCSARYN) lie on the Cytoplasmic side of the membrane. At Ser3 the chain carries Phosphoserine. A Dileucine internalization motif motif is present at residues 22–23 (LL). A helical transmembrane segment spans residues 42–62 (LAILAFFGFFIVYALRVNLSV). Over 63 to 109 (ALVDMVDSNTTLEDNRTSKACPEHSAPIKVHHNQTGKKYQWDAETQG) the chain is Lumenal. 3 N-linked (GlcNAc...) asparagine glycosylation sites follow: Asn71, Asn77, and Asn95. Residues 110-130 (WILGSFFYGYIITQIPGGYVA) traverse the membrane as a helical segment. Over 131-136 (SKIGGK) the chain is Cytoplasmic. The helical transmembrane segment at 137-157 (MLLGFGILGTAVLTLFTPIAA) threads the bilayer. Residue Asp158 is a topological domain, lumenal. Residues 159–179 (LGVGPLIVLRALEGLGEGVTF) form a helical membrane-spanning segment. The Cytoplasmic portion of the chain corresponds to 180-200 (PAMHAMWSSWAPPLERSKLLS). A helical membrane pass occupies residues 201 to 221 (ISYAGAQLGTVISLPLSGIIC). At 222–227 (YYMNWT) the chain is on the lumenal side. A helical membrane pass occupies residues 228–248 (YVFYFFGTIGIFWFLLWIWLV). Over 249–279 (SDTPQKHKRISHYEKEYILSSLRNQLSSQKS) the chain is Cytoplasmic. The chain crosses the membrane as a helical span at residues 280–300 (VPWVPILKSLPLWAIVVAHFS). Residues 301-328 (YNWTFYTLLTLLPTYMKEILRFNVQENG) lie on the Lumenal side of the membrane. A helical transmembrane segment spans residues 329 to 349 (FLSSLPYLGSWLCMILSGQAA). Topologically, residues 350 to 365 (DNLRAKWNFSTLCVRR) are cytoplasmic. Residues 366-386 (IFSLIGMIGPAVFLVAAGFIG) form a helical membrane-spanning segment. Topologically, residues 387–391 (CDYSL) are lumenal. The chain crosses the membrane as a helical span at residues 392–412 (AVAFLTISTTLGGFCSSGFSI). Over 413–423 (NHLDIAPSYAG) the chain is Cytoplasmic. Residues 424 to 444 (ILLGITNTFATIPGMVGPVIA) traverse the membrane as a helical segment. Residues 445-457 (KSLTPDNTVGEWQ) lie on the Lumenal side of the membrane. The chain crosses the membrane as a helical span at residues 458-478 (TVFYIAAAINVFGAIFFTLFA). Residues 479–495 (KGEVQNWALNDHHGHRH) are Cytoplasmic-facing.

Belongs to the major facilitator superfamily. Sodium/anion cotransporter family. In terms of tissue distribution, in the adult, detected in placenta, kidney and pancreas. Abundant in the endothelial cells of tumors from ovary, colon, breast and lung, but is not detected in endothelial cells from the corresponding normal tissues. Highly expressed in salivary glands and liver, with lower levels of expression in brain, spleen kidney, muscle and pancreas. Expressed in acinar cells of salivary glands (at protein level).

It localises to the basolateral cell membrane. The protein resides in the cytoplasmic vesicle. It is found in the secretory vesicle. Its subcellular location is the synaptic vesicle membrane. The protein localises to the lysosome membrane. The enzyme catalyses N-acetylneuraminate(in) + H(+)(in) = N-acetylneuraminate(out) + H(+)(out). The catalysed reaction is D-glucuronate(out) + H(+)(out) = D-glucuronate(in) + H(+)(in). It carries out the reaction 2 nitrate(out) + H(+)(out) = 2 nitrate(in) + H(+)(in). It catalyses the reaction L-aspartate(out) = L-aspartate(in). The enzyme catalyses L-glutamate(out) = L-glutamate(in). The catalysed reaction is N-acetyl-L-aspartyl-L-glutamate(out) = N-acetyl-L-aspartyl-L-glutamate(in). In terms of biological role, multifunctional anion transporter that operates via two distinct transport mechanisms, namely proton-coupled anion cotransport and membrane potential-dependent anion transport. Electroneutral proton-coupled acidic monosaccharide symporter, with a sugar to proton stoichiometry of 1:1. Exports glucuronic acid and free sialic acid derived from sialoglycoconjugate degradation out of lysosomes, driven by outwardly directed lysosomal pH gradient. May regulate lysosome function and metabolism of sialylated conjugates that impact oligodendrocyte lineage differentiation and myelinogenesis in the central nervous system. Electrogenic proton-coupled nitrate symporter that transports nitrate ions across the basolateral membrane of salivary gland acinar cells, with nitrate to proton stoichiometry of 2:1. May contribute to nitrate clearance from serum by salivary glands, where it is further concentrated and secreted in the saliva. Uses membrane potential to drive the uptake of acidic amino acids and peptides into synaptic vesicles. Responsible for synaptic vesicular storage of L-aspartate and L-glutamate in pinealocytes as well as vesicular uptake of N-acetyl-L-aspartyl-L-glutamate neuropeptide, relevant to aspartegic-associated glutamatergic neurotransmission and activation of metabotropic receptors that inhibit subsequent transmitter release. Functionally, receptor for CM101, a polysaccharide produced by group B Streptococcus with antipathoangiogenic properties. The polypeptide is Sialin (SLC17A5) (Homo sapiens (Human)).